A 432-amino-acid chain; its full sequence is MTTSATLFYRAQQVIPGGVNSPVRAFKGVGGTPVFIEKANGAYIFDIEGKQYIDYVGSWGPMILGHNHPSILSAVLKIAENGLSFGTPTPLEIELAELICQLVPSIEMVRMVNSGTEATMSAIRLARGYTKRDKILKFEGCYHGHSDSLLVKAGSGSLTLGQPSSPGVPEDFAKHTITCEYNNLQSVKNAFEQYPDQIACVIVEPVAGNMNCILPKQDFLQGLRQLCNEYGSLFIIDEVMTGFRVALGGAQSYYEVTPDLTTLGKVIGGGMPVGAFGGKKEIMQYIAPTGPVYQAGTLSGNPIAMSAGIACLNELKKEGNEQRLAMLTKKLALGLKNLANQHNIPLVVNYVGGMFGIFFTTQNEVTSYQQAIQCDIERFNLFFHKMLEQGVYLAPSAFEAGFMSLAHTDADIDRTLQAADIAFASLRSSSFS.

N6-(pyridoxal phosphate)lysine is present on Lys265.

This sequence belongs to the class-III pyridoxal-phosphate-dependent aminotransferase family. HemL subfamily. Homodimer. Pyridoxal 5'-phosphate serves as cofactor.

It is found in the cytoplasm. The catalysed reaction is (S)-4-amino-5-oxopentanoate = 5-aminolevulinate. It participates in porphyrin-containing compound metabolism; protoporphyrin-IX biosynthesis; 5-aminolevulinate from L-glutamyl-tRNA(Glu): step 2/2. The chain is Glutamate-1-semialdehyde 2,1-aminomutase from Histophilus somni (strain 2336) (Haemophilus somnus).